The primary structure comprises 1190 residues: Phosphatidylinositol 3,4,5-trisphosphate 5-phosphatase 1 (1190 aa).

Residues 8–104 enclose the SH2 domain; it reads WNHGNITRSK…GLVTHLQFPV (97 aa). The segment covering 111–120 has biased composition (acidic residues); it reads AIDEPEEDTE. The interval 111-130 is disordered; that stretch reads AIDEPEEDTESVMSPPELPP. The SH3-binding 1 motif lies at 126–131; sequence PELPPR. Phosphoserine is present on Ser-245. Residues 914–917 carry the NPXY motif 1 motif; sequence NPNY. Phosphotyrosine is present on Tyr-917. Ser-934 is modified (phosphoserine). Phosphotyrosine is present on Tyr-944. A disordered region spans residues 946–1190; sequence QLPKDSSLGP…ESLLGRTAMQ (245 aa). The segment covering 961-971 has biased composition (pro residues); the sequence is PPTPPSQPPLS. Thr-963 is subject to Phosphothreonine. 2 positions are modified to phosphoserine: Ser-966 and Ser-971. An SH3-binding 2 motif is present at residues 969-974; the sequence is PLSPKK. Residues 989–998 show a composition bias toward basic and acidic residues; the sequence is QETRPGDLGK. The interaction with DAB2 stretch occupies residues 1014-1028; it reads MFENPLYGSVSPFPK. The NPXY motif 2 signature appears at 1017–1020; that stretch reads NPLY. Tyr-1020 bears the Phosphotyrosine mark. Residues 1031 to 1045 show a composition bias toward basic and acidic residues; it reads PRKEQESPKMMRKEP. Positions 1038–1049 match the SH3-binding 3 motif; sequence PKMMRKEPPPCP. A compositionally biased stretch (pro residues) spans 1140-1149; sequence IPAPRPPLPV. Residues 1161–1183 are compositionally biased toward basic and acidic residues; it reads KGRDYRDNTELPHHGKHRQEESL.

This sequence belongs to the inositol 1,4,5-trisphosphate 5-phosphatase family. Interacts with tyrosine phosphorylated forms of SHC1. Interacts with tyrosine phosphorylated form of DOK1. Interacts with tyrosine phosphorylated form of DOK3. Interacts with tyrosine phosphorylated form of SLAMF1/CD150. Interacts with PTPN11/SHP-2 in response to IL-3. Interacts with receptor EPOR. Interacts with receptors MS4A2/FCER1B and FCER1G. Interacts with receptors FCGR2B and FCGR3. Interacts with receptor FCGR2A, leading to regulate gene expression during the phagocytic process. Interacts with GRB2. Interacts with PLCG1. Interacts with tyrosine kinases SRC and TEC. Interacts with c-Met/MET. Interacts with MILR1 (tyrosine-phosphorylated). Can weakly interact (via NPXY motif 2) with DAB2 (via PID domain); the interaction is impaired by tyrosine phosphorylation of the NPXY motif. Interacts (via SH2 domain) with tyrosine phosphorylated KLRC1 (via ITIM). Interacts with MPL/TPOR. In terms of processing, tyrosine phosphorylated by the members of the SRC family after exposure to a diverse array of extracellular stimuli such as cytokines, growth factors, antibodies, chemokines, integrin ligands and hypertonic and oxidative stress. Phosphorylated upon IgG receptor FCGR2B-binding.

The protein resides in the cytoplasm. It localises to the cell membrane. It is found in the membrane raft. Its subcellular location is the cytoskeleton. The catalysed reaction is a 1,2-diacyl-sn-glycero-3-phospho-(1D-myo-inositol-3,4,5-trisphosphate) + H2O = a 1,2-diacyl-sn-glycero-3-phospho-(1D-myo-inositol-3,4-bisphosphate) + phosphate. It catalyses the reaction 1D-myo-inositol 1,3,4,5-tetrakisphosphate + H2O = 1D-myo-inositol 1,3,4-trisphosphate + phosphate. It carries out the reaction a 1,2-diacyl-sn-glycero-3-phospho-(1D-myo-inositol-4,5-bisphosphate) + H2O = a 1,2-diacyl-sn-glycero-3-phospho-(1D-myo-inositol 4-phosphate) + phosphate. With respect to regulation, activated upon translocation to the sites of synthesis of PtdIns(3,4,5)P3 in the membrane. Phosphatidylinositol (PtdIns) phosphatase that specifically hydrolyzes the 5-phosphate of phosphatidylinositol-3,4,5-trisphosphate (PtdIns(3,4,5)P3) to produce PtdIns(3,4)P2, thereby negatively regulating the PI3K (phosphoinositide 3-kinase) pathways. Also able to hydrolyze the 5-phosphate of phosphatidylinositol-4,5-bisphosphate (PtdIns(4,5)P3) and inositol 1,3,4,5-tetrakisphosphate. Acts as a negative regulator of B-cell antigen receptor signaling. Mediates signaling from the FC-gamma-RIIB receptor (FCGR2B), playing a central role in terminating signal transduction from activating immune/hematopoietic cell receptor systems. Acts as a negative regulator of myeloid cell proliferation/survival and chemotaxis, mast cell degranulation, immune cells homeostasis, integrin alpha-IIb/beta-3 signaling in platelets and JNK signaling in B-cells. Regulates proliferation of osteoclast precursors, macrophage programming, phagocytosis and activation and is required for endotoxin tolerance. Involved in the control of cell-cell junctions, CD32a signaling in neutrophils and modulation of EGF-induced phospholipase C activity. Key regulator of neutrophil migration, by governing the formation of the leading edge and polarization required for chemotaxis. Modulates FCGR3/CD16-mediated cytotoxicity in NK cells. Mediates the activin/TGF-beta-induced apoptosis through its Smad-dependent expression. The sequence is that of Phosphatidylinositol 3,4,5-trisphosphate 5-phosphatase 1 (Inpp5d) from Rattus norvegicus (Rat).